The primary structure comprises 147 residues: uncharacterized protein (147 aa).

4Fe-4S ferredoxin-type domains lie at 80–109 and 110–141; these read WYPKIDYNRCKNCEKCISFCPRGVYDAENG and KVVVKYPYSCIVNCNACSIMCCENNAIIFPDE. [4Fe-4S] cluster is bound by residues Cys-89, Cys-92, Cys-95, Cys-99, Cys-119, Cys-123, Cys-126, and Cys-130.

The cofactor is [4Fe-4S] cluster.

This is an uncharacterized protein from Methanocaldococcus jannaschii (strain ATCC 43067 / DSM 2661 / JAL-1 / JCM 10045 / NBRC 100440) (Methanococcus jannaschii).